The chain runs to 179 residues: Large ribosomal subunit protein uL5 (179 aa).

The protein belongs to the universal ribosomal protein uL5 family. As to quaternary structure, part of the 50S ribosomal subunit; part of the 5S rRNA/L5/L18/L25 subcomplex. Contacts the 5S rRNA and the P site tRNA. Forms a bridge to the 30S subunit in the 70S ribosome.

Its function is as follows. This is one of the proteins that bind and probably mediate the attachment of the 5S RNA into the large ribosomal subunit, where it forms part of the central protuberance. In the 70S ribosome it contacts protein S13 of the 30S subunit (bridge B1b), connecting the 2 subunits; this bridge is implicated in subunit movement. Contacts the P site tRNA; the 5S rRNA and some of its associated proteins might help stabilize positioning of ribosome-bound tRNAs. The polypeptide is Large ribosomal subunit protein uL5 (Vibrio vulnificus (strain CMCP6)).